A 425-amino-acid polypeptide reads, in one-letter code: UDP-N-acetylglucosamine 1-carboxyvinyltransferase (425 aa).

22-23 (KN) lines the phosphoenolpyruvate pocket. R91 contributes to the UDP-N-acetyl-alpha-D-glucosamine binding site. The active-site Proton donor is C115. C115 carries the post-translational modification 2-(S-cysteinyl)pyruvic acid O-phosphothioketal. UDP-N-acetyl-alpha-D-glucosamine is bound by residues 120–124 (RPIDL), D305, and V327.

Belongs to the EPSP synthase family. MurA subfamily.

Its subcellular location is the cytoplasm. It carries out the reaction phosphoenolpyruvate + UDP-N-acetyl-alpha-D-glucosamine = UDP-N-acetyl-3-O-(1-carboxyvinyl)-alpha-D-glucosamine + phosphate. Its pathway is cell wall biogenesis; peptidoglycan biosynthesis. Cell wall formation. Adds enolpyruvyl to UDP-N-acetylglucosamine. This is UDP-N-acetylglucosamine 1-carboxyvinyltransferase from Coprothermobacter proteolyticus (strain ATCC 35245 / DSM 5265 / OCM 4 / BT).